The sequence spans 912 residues: Nonsense-mediated mRNA decay factor SMG8 (912 aa).

Residues 565–630 (EHSNRTPDAS…GEDEDETLEQ (66 aa)) are disordered. Polar residues predominate over residues 570–602 (TPDASTHPPMTNENSPHLSGSQKSQDSASNLTF). A compositionally biased stretch (basic and acidic residues) spans 604-614 (MDEKRDEENKS).

Belongs to the SMG8 family.

Involved in nonsense-mediated decay (NMD) of mRNAs containing premature stop codons. Probable component of kinase complex containing SMG1 and recruited to stalled ribosomes. The chain is Nonsense-mediated mRNA decay factor SMG8 from Culex quinquefasciatus (Southern house mosquito).